Reading from the N-terminus, the 223-residue chain is Thymidine kinase (223 aa).

ATP contacts are provided by residues 19 to 26 (GPMFAGKT) and 96 to 99 (DEVQ). Glu97 functions as the Proton acceptor in the catalytic mechanism. Zn(2+)-binding residues include Cys153, Cys156, Cys191, and His194.

Belongs to the thymidine kinase family. As to quaternary structure, homotetramer.

The protein localises to the cytoplasm. The enzyme catalyses thymidine + ATP = dTMP + ADP + H(+). In Ureaplasma urealyticum serovar 10 (strain ATCC 33699 / Western), this protein is Thymidine kinase.